A 498-amino-acid chain; its full sequence is Putative antiporter subunit mnhD2 (498 aa).

A run of 14 helical transmembrane segments spans residues 2 to 22 (LSNL…ILVF), 32 to 52 (YLYL…LIYV), 78 to 98 (LSLI…AYGF), 108 to 128 (YHLP…FLTS), 130 to 150 (LFNL…LITL), 161 to 181 (IIYV…IGLL), 209 to 229 (ISLI…FMWL), 240 to 260 (LAAL…IRFF), 271 to 291 (IHPL…IGVI), 308 to 328 (IGFI…GAIF), 330 to 350 (LVND…LVYI), 369 to 389 (FGVA…FSGF), 403 to 423 (GNYI…YSLF), and 451 to 471 (ILSI…VVLN).

It belongs to the CPA3 antiporters (TC 2.A.63) subunit D family. May form a heterooligomeric complex that consists of seven subunits: mnhA2, mnhB2, mnhC2, mnhD2, mnhE2, mnhF2 and mnhG2.

It is found in the cell membrane. This Staphylococcus aureus (strain JH1) protein is Putative antiporter subunit mnhD2 (mnhD2).